The chain runs to 333 residues: Phosphoribosylformylglycinamidine cyclo-ligase (333 aa).

The protein belongs to the AIR synthase family.

The protein localises to the cytoplasm. It catalyses the reaction 2-formamido-N(1)-(5-O-phospho-beta-D-ribosyl)acetamidine + ATP = 5-amino-1-(5-phospho-beta-D-ribosyl)imidazole + ADP + phosphate + H(+). It participates in purine metabolism; IMP biosynthesis via de novo pathway; 5-amino-1-(5-phospho-D-ribosyl)imidazole from N(2)-formyl-N(1)-(5-phospho-D-ribosyl)glycinamide: step 2/2. This chain is Phosphoribosylformylglycinamidine cyclo-ligase, found in Methanococcoides burtonii (strain DSM 6242 / NBRC 107633 / OCM 468 / ACE-M).